Consider the following 306-residue polypeptide: HTH-type transcriptional regulator AlkR (306 aa).

The 99-residue stretch at 207-305 (SNALAAIHAY…EQSPKHYRQQ (99 aa)) folds into the HTH araC/xylS-type domain. 2 consecutive DNA-binding regions (H-T-H motif) follow at residues 224–245 (ESLA…QSIV) and 272–295 (IQQI…KRQF).

Its pathway is hydrocarbon metabolism; alkane degradation. This protein activates the expression of the alkane 1-monooxygenase AlkM. This is HTH-type transcriptional regulator AlkR (alkR) from Acinetobacter baylyi (strain ATCC 33305 / BD413 / ADP1).